The chain runs to 126 residues: Flagellar protein FliT (126 aa).

The segment at 1 to 50 (MVSPHRLLKDYQQLLSLSQKILHLAISGQWDTLVEQEIVYVQSVEGLVNT) is required for homodimerization. The tract at residues 60 to 98 (MRLHLRQILQEVMDNEAKVKQLLQKRMDELSSLMGQSLK) is fliD binding.

The protein belongs to the FliT family. In terms of assembly, homodimer. Interacts with FliD and FlhC.

Its subcellular location is the cytoplasm. The protein localises to the cytosol. Its function is as follows. Dual-function protein that regulates the transcription of class 2 flagellar operons and that also acts as an export chaperone for the filament-capping protein FliD. As a transcriptional regulator, acts as an anti-FlhDC factor; it directly binds FlhC, thus inhibiting the binding of the FlhC/FlhD complex to class 2 promoters, resulting in decreased expression of class 2 flagellar operons. As a chaperone, effects FliD transition to the membrane by preventing its premature polymerization, and by directing it to the export apparatus. This chain is Flagellar protein FliT, found in Pectobacterium atrosepticum (strain SCRI 1043 / ATCC BAA-672) (Erwinia carotovora subsp. atroseptica).